The following is a 166-amino-acid chain: 16S rRNA aminocarboxypropyltransferase (166 aa).

Residues threonine 17, isoleucine 62, leucine 84, tyrosine 99, and serine 103 each contribute to the S-adenosyl-L-methionine site.

The protein belongs to the TDD superfamily. TSR3 family.

The protein localises to the cytoplasm. The catalysed reaction is an N(1)-methylpseudouridine in rRNA + S-adenosyl-L-methionine = N(1)-methyl-N(3)-[(3S)-3-amino-3-carboxypropyl]pseudouridine in rRNA + S-methyl-5'-thioadenosine + H(+). In terms of biological role, aminocarboxypropyltransferase that catalyzes the aminocarboxypropyl transfer on pseudouridine corresponding to position 914 in M.jannaschii 16S rRNA. It constitutes the last step in biosynthesis of the hypermodified N1-methyl-N3-(3-amino-3-carboxypropyl) pseudouridine (m1acp3-Psi). This Saccharolobus islandicus (strain M.16.27) (Sulfolobus islandicus) protein is 16S rRNA aminocarboxypropyltransferase.